The primary structure comprises 331 residues: XylDLEGF operon transcriptional activator 1 (331 aa).

The HTH araC/xylS-type domain maps to 214 to 315 (ERVVQFIEEN…GELPSDTLRR (102 aa)). 2 DNA-binding regions (H-T-H motif) span residues 231 to 252 (ERLAELALMSPRSLYTLFEKHA) and 282 to 305 (VTEMALDYGFFHTGRFAENYRSTF).

The protein localises to the cytoplasm. Regulatory protein of the TOL plasmid xyl operons. XylS activates the xylXYZLTEGFJQKIH operon required for the degradation of toluene, m-xylene and p-xylene. This Pseudomonas putida (Arthrobacter siderocapsulatus) protein is XylDLEGF operon transcriptional activator 1 (xylS1).